Here is a 348-residue protein sequence, read N- to C-terminus: D-erythrose-4-phosphate dehydrogenase (348 aa).

NAD(+)-binding positions include 12-13 (RI) and arginine 81. Residues 154–156 (SCT), arginine 200, 213–214 (TK), and arginine 236 contribute to the substrate site. Cysteine 155 acts as the Nucleophile in catalysis. Residue asparagine 318 coordinates NAD(+).

The protein belongs to the glyceraldehyde-3-phosphate dehydrogenase family. Epd subfamily. In terms of assembly, homotetramer.

It is found in the cytoplasm. The catalysed reaction is D-erythrose 4-phosphate + NAD(+) + H2O = 4-phospho-D-erythronate + NADH + 2 H(+). The protein operates within cofactor biosynthesis; pyridoxine 5'-phosphate biosynthesis; pyridoxine 5'-phosphate from D-erythrose 4-phosphate: step 1/5. Catalyzes the NAD-dependent conversion of D-erythrose 4-phosphate to 4-phosphoerythronate. In Salmonella schwarzengrund (strain CVM19633), this protein is D-erythrose-4-phosphate dehydrogenase.